We begin with the raw amino-acid sequence, 839 residues long: Dynein axonemal assembly factor 5 (839 aa).

HEAT repeat units follow at residues threonine 10–leucine 48, glutamine 54–arginine 92, glutamate 94–lysine 137, alanine 140–glutamate 178, histidine 181–glycine 219, serine 221–aspartate 257, tyrosine 259–lysine 297, glycine 578–glutamate 617, leucine 675–arginine 713, proline 717–aspartate 755, and isoleucine 723–threonine 761.

This sequence belongs to the DNAAF5 family. In terms of assembly, interacts with DNAI2; probably involved in outer arm dynein assembly.

It localises to the cytoplasm. Its subcellular location is the dynein axonemal particle. Functionally, cytoplasmic protein involved in the delivery of the dynein machinery to the motile cilium. It is required for the assembly of the axonemal dynein inner and outer arms, two structures attached to the peripheral outer doublet A microtubule of the axoneme, that play a crucial role in cilium motility. The protein is Dynein axonemal assembly factor 5 of Xenopus laevis (African clawed frog).